The chain runs to 369 residues: Terpene cyclase DEP1 (369 aa).

8 helical membrane-spanning segments follow: residues 9 to 29, 82 to 102, 118 to 138, 157 to 177, 190 to 210, 234 to 254, 298 to 318, and 342 to 362; these read FFYL…FNGM, LLFF…LIES, AMVL…LYLV, ALLV…VPAW, IALF…LASI, LVLA…GALI, LFSQ…SHLL, and LVYL…SFAL.

The protein belongs to the membrane-bound ascI terpene cyclase family.

The protein localises to the membrane. Its pathway is polyketide biosynthesis. Its function is as follows. Part of the gene cluster that mediates the biosynthesis of depudecin, a highly oxidized eleven-carbon linear polyketide that acts as a histone deacetylase (HDAC) inhibitor and makes a small contribution to pathogenesis. The reducing polyketide synthase DEP5 is the central enzyme in depudecin biosynthesis by yielding the backbone polyketide chain. The monooxygenases DEP2 and DEP4, as well as the uncharacterized protein DEP1, then act as tailoring enzymes to modify the intermediate polyketide chain into depudecin. In Alternaria brassicicola (Dark leaf spot agent), this protein is Terpene cyclase DEP1.